A 629-amino-acid chain; its full sequence is G1-specific transcription factors activator MSA1 (629 aa).

Positions 1–11 (MDKSMIKKRGR) are enriched in basic residues. 5 disordered regions span residues 1-60 (MDKS…KRRL), 83-106 (STPT…NDSY), 217-286 (YCDT…SSLQ), 455-485 (VQVQ…NMNS), and 586-629 (PNLH…IDDQ). Residues 21 to 37 (PLQSPMAHSSMQVQKQG) show a composition bias toward polar residues. The span at 245 to 260 (IETSASPIGSARNNNI) shows a compositional bias: polar residues. Low complexity-rich tracts occupy residues 261–277 (LLSQ…QLKP) and 455–475 (VQVQ…RQFQ). A Phosphoserine modification is found at Ser268. The segment covering 614–629 (KQDDARTALKRLIDDQ) has biased composition (basic and acidic residues).

As to quaternary structure, interacts with transcription complexes SCB-binding factor (SBF) and MCB-binding factor (MBF) at their target promoters. Interacts with MBP1 and SWI6. In terms of processing, phosphorylated by CDC28.

In terms of biological role, activator of G1-specific transcription factors, MBF and SBF. Promotes both the timing of G1-specific gene transcription and cell cycle initiation. Associates with SBF- and MBF-regulated target promoters and this binding is maximal during the G1 phase, prior to maximum budding. Affects cell cycle initiation by advancing the timing of transcription of G1-specific genes. Overexpression advances the timing of SBF-dependent transcription and budding. Depletion delays both indicators of cell cycle initiation. The polypeptide is G1-specific transcription factors activator MSA1 (MSA1) (Saccharomyces cerevisiae (strain ATCC 204508 / S288c) (Baker's yeast)).